Consider the following 715-residue polypeptide: Scinderin (715 aa).

The segment at 1-363 (MAQGLYHEEF…DGFGKVYVTE (363 aa)) is actin-severing. The stretch at 27 to 77 (LELVPVPESAYGNFYVGDAYLVLHTTQASRGFTYRLHFWLGKECTQDESTA) is one Gelsolin-like 1 repeat. Position 102 is a phosphotyrosine (Y102). A 1,2-diacyl-sn-glycero-3-phospho-(1D-myo-inositol-4,5-bisphosphate)-binding positions include 112 to 119 (KGGLKYKA) and 138 to 146 (RLLHVKGRR). 4 Gelsolin-like repeats span residues 148–188 (VRAT…YERL), 265–307 (LVAE…QERK), 398–451 (VQIW…DELT), and 523–564 (TRIM…EEEK). The tract at residues 364–715 (KVAHVKQIPF…WFLGWDSSRW (352 aa)) is actin-binding, Ca-sensitive. The interval 364–715 (KVAHVKQIPF…WFLGWDSSRW (352 aa)) is ca(2+)-dependent actin binding. Ca(2+) contacts are provided by N538, D539, and E562. Residue Y599 is modified to Phosphotyrosine. A Gelsolin-like 6 repeat occupies 626–668 (FIIEEVPGEFTQDDLAEDDVMLLDAWEQIFIWIGKDANEVEKS). Residues D643, D644, and E666 each contribute to the Ca(2+) site.

Belongs to the villin/gelsolin family. Post-translationally, the N-terminus is blocked. As to expression, in the adrenal gland, expressed in the medulla but, in the cortex, found only in diffuse parts.

The protein resides in the cytoplasm. It is found in the cytoskeleton. The protein localises to the cell projection. It localises to the podosome. In terms of biological role, ca(2+)-dependent actin filament-severing protein that has a regulatory function in exocytosis by affecting the organization of the microfilament network underneath the plasma membrane. In vitro, also has barbed end capping and nucleating activities in the presence of Ca(2+). Severing activity is inhibited by phosphatidylinositol 4,5-bis-phosphate (PIP2). Required for megakaryocyte differentiation, maturation, polyploidization and apoptosis with the release of platelet-like particles. Plays a role in osteoclastogenesis (OCG) and actin cytoskeletal organization in osteoclasts. Regulates chondrocyte proliferation and differentiation. Inhibits cell proliferation and tumorigenesis. Signaling is mediated by MAPK, p38 and JNK pathways. This Bos taurus (Bovine) protein is Scinderin.